Here is a 376-residue protein sequence, read N- to C-terminus: Geranylgeranyl transferase type-1 subunit beta (376 aa).

PFTB repeat units follow at residues 128–179 (KRSL…YICG), 192–231 (TEKL…ALLS), 259–301 (MKFE…HLLT), and 310–353 (TELV…ALIE). Geranylgeranyl diphosphate contacts are provided by residues 216–218 (HSG) and 280–283 (RENK). 2 residues coordinate Zn(2+): Asp286 and Cys288. Position 289 to 292 (289 to 292 (YAFW)) interacts with geranylgeranyl diphosphate. A Zn(2+)-binding site is contributed by His341.

It belongs to the protein prenyltransferase subunit beta family. Heterodimer of an alpha (RAM2) and a beta (CDC43) subunit. Zn(2+) serves as cofactor. It depends on Mg(2+) as a cofactor.

The protein localises to the cytoplasm. The catalysed reaction is geranylgeranyl diphosphate + L-cysteinyl-[protein] = S-geranylgeranyl-L-cysteinyl-[protein] + diphosphate. Its function is as follows. Catalyzes the transfer of a geranyl-geranyl moiety from geranyl-geranyl diphosphate to proteins having the C-terminal sequence Cys-Ile-Ile-Leu or Cys-Val-Leu-Leu. Acts, among other substrates, on Rho1 and Rho2 and CDC42 proteins. Participates in a RAS-like C-terminal modification of proteins involved in nuclear division and bud growth. It is involved in bud positioning and cell polarity. The beta subunit is responsible for isoprenoid and peptide-binding. In Saccharomyces cerevisiae (strain ATCC 204508 / S288c) (Baker's yeast), this protein is Geranylgeranyl transferase type-1 subunit beta (CDC43).